A 232-amino-acid polypeptide reads, in one-letter code: Large ribosomal subunit protein uL1 (232 aa).

Belongs to the universal ribosomal protein uL1 family. In terms of assembly, part of the 50S ribosomal subunit.

Its function is as follows. Binds directly to 23S rRNA. The L1 stalk is quite mobile in the ribosome, and is involved in E site tRNA release. Functionally, protein L1 is also a translational repressor protein, it controls the translation of the L11 operon by binding to its mRNA. This is Large ribosomal subunit protein uL1 from Jannaschia sp. (strain CCS1).